The primary structure comprises 149 residues: D-aminoacyl-tRNA deacylase (149 aa).

The short motif at 137-138 (GP) is the Gly-cisPro motif, important for rejection of L-amino acids element.

It belongs to the DTD family. As to quaternary structure, homodimer.

It is found in the cytoplasm. The enzyme catalyses glycyl-tRNA(Ala) + H2O = tRNA(Ala) + glycine + H(+). The catalysed reaction is a D-aminoacyl-tRNA + H2O = a tRNA + a D-alpha-amino acid + H(+). Its function is as follows. An aminoacyl-tRNA editing enzyme that deacylates mischarged D-aminoacyl-tRNAs. Also deacylates mischarged glycyl-tRNA(Ala), protecting cells against glycine mischarging by AlaRS. Acts via tRNA-based rather than protein-based catalysis; rejects L-amino acids rather than detecting D-amino acids in the active site. By recycling D-aminoacyl-tRNA to D-amino acids and free tRNA molecules, this enzyme counteracts the toxicity associated with the formation of D-aminoacyl-tRNA entities in vivo and helps enforce protein L-homochirality. The sequence is that of D-aminoacyl-tRNA deacylase from Janthinobacterium sp. (strain Marseille) (Minibacterium massiliensis).